Here is a 592-residue protein sequence, read N- to C-terminus: A-type ATP synthase subunit A (592 aa).

Residue 231–238 (GGFGTGKT) coordinates ATP.

It belongs to the ATPase alpha/beta chains family. In terms of assembly, has multiple subunits with at least A(3), B(3), C, D, E, F, H, I and proteolipid K(x).

Its subcellular location is the cell membrane. It carries out the reaction ATP + H2O + 4 H(+)(in) = ADP + phosphate + 5 H(+)(out). Component of the A-type ATP synthase that produces ATP from ADP in the presence of a proton gradient across the membrane. The A chain is the catalytic subunit. This is A-type ATP synthase subunit A from Staphylothermus marinus (strain ATCC 43588 / DSM 3639 / JCM 9404 / F1).